A 285-amino-acid polypeptide reads, in one-letter code: Phycobilisome 31.6 kDa linker polypeptide, phycocyanin-associated, rod (285 aa).

The PBS-linker domain maps to 1–180; that stretch reads MPITTAASRL…LYRGYATSDR (180 aa).

It belongs to the phycobilisome linker protein family.

The protein localises to the cellular thylakoid membrane. Rod linker protein, associated with phycocyanin. Linker polypeptides determine the state of aggregation and the location of the disk-shaped phycobiliprotein units within the phycobilisome and modulate their spectroscopic properties in order to mediate a directed and optimal energy transfer. This Microchaete diplosiphon (Fremyella diplosiphon) protein is Phycobilisome 31.6 kDa linker polypeptide, phycocyanin-associated, rod (cpcI3).